We begin with the raw amino-acid sequence, 146 residues long: NADH-quinone oxidoreductase subunit A (146 aa).

3 consecutive transmembrane segments (helical) span residues 4-24 (IYHWGLIAFIVGILFLCVFML), 63-83 (LIAMFFVIFDVEGIYVYAWAI), and 91-111 (IGFSEIFIFIFILLVSLIYLI).

It belongs to the complex I subunit 3 family. In terms of assembly, NDH-1 is composed of 13 different subunits. Subunits NuoA, H, J, K, L, M, N constitute the membrane sector of the complex.

The protein resides in the cell inner membrane. It carries out the reaction a quinone + NADH + 5 H(+)(in) = a quinol + NAD(+) + 4 H(+)(out). In terms of biological role, NDH-1 shuttles electrons from NADH, via FMN and iron-sulfur (Fe-S) centers, to quinones in the respiratory chain. The immediate electron acceptor for the enzyme in this species is believed to be ubiquinone. Couples the redox reaction to proton translocation (for every two electrons transferred, four hydrogen ions are translocated across the cytoplasmic membrane), and thus conserves the redox energy in a proton gradient. This is NADH-quinone oxidoreductase subunit A from Blochmanniella pennsylvanica (strain BPEN).